The sequence spans 194 residues: 3-isopropylmalate dehydratase small subunit (194 aa).

The protein belongs to the LeuD family. LeuD type 1 subfamily. In terms of assembly, heterodimer of LeuC and LeuD.

The enzyme catalyses (2R,3S)-3-isopropylmalate = (2S)-2-isopropylmalate. It participates in amino-acid biosynthesis; L-leucine biosynthesis; L-leucine from 3-methyl-2-oxobutanoate: step 2/4. Catalyzes the isomerization between 2-isopropylmalate and 3-isopropylmalate, via the formation of 2-isopropylmaleate. In Brevibacillus brevis (strain 47 / JCM 6285 / NBRC 100599), this protein is 3-isopropylmalate dehydratase small subunit.